The following is a 761-amino-acid chain: Ribonucleoside-diphosphate reductase 1 subunit alpha (761 aa).

The ATP-cone domain maps to 5 to 95; sequence LLVTKRDGRT…IFHLRKKAFG (91 aa). ATP contacts are provided by residues Lys-9, 15-21, Thr-55, and Lys-91; that span reads ERINLDK. Residue Thr-209 participates in GDP binding. A disulfide bridge links Cys-225 with Cys-462. Residues 232 to 234, Arg-262, and Arg-269 contribute to the dTTP site; that span reads DSL. GDP is bound at residue Asn-437. The Proton acceptor role is filled by Asn-437. Residue Cys-439 is the Cysteine radical intermediate of the active site. GDP-binding positions include Glu-441 and 623–625; that span reads ETS. Glu-441 acts as the Proton acceptor in catalysis.

Belongs to the ribonucleoside diphosphate reductase large chain family. Tetramer of two alpha (R1) and two beta (R2) subunits. The B1 protein is a dimer of alpha subunits. A radical transfer pathway occurs between 'Tyr-122' of R2 and R1.

It carries out the reaction a 2'-deoxyribonucleoside 5'-diphosphate + [thioredoxin]-disulfide + H2O = a ribonucleoside 5'-diphosphate + [thioredoxin]-dithiol. With respect to regulation, under complex allosteric control mediated by deoxynucleoside triphosphates and ATP binding to separate specificity and activation sites on the alpha subunit. The type of nucleotide bound at the specificity site determines substrate preference. It seems probable that ATP makes the enzyme reduce CDP and UDP, dGTP favors ADP reduction and dTTP favors GDP reduction. Stimulated by ATP and inhibited by dATP binding to the activity site. Provides the precursors necessary for DNA synthesis. Catalyzes the biosynthesis of deoxyribonucleotides from the corresponding ribonucleotides. R1 contains the binding sites for both substrates and allosteric effectors and carries out the actual reduction of the ribonucleotide. The chain is Ribonucleoside-diphosphate reductase 1 subunit alpha (nrdA) from Salmonella typhimurium (strain LT2 / SGSC1412 / ATCC 700720).